The following is a 647-amino-acid chain: Threonine--tRNA ligase (647 aa).

The 61-residue stretch at 1–61 (MIKITFPDGA…EEDGSIEIVT (61 aa)) folds into the TGS domain. The tract at residues 240 to 538 (DHRKLGKELD…LIETYKGAFP (299 aa)) is catalytic. Zn(2+) contacts are provided by Cys-334, His-385, and His-515.

This sequence belongs to the class-II aminoacyl-tRNA synthetase family. In terms of assembly, homodimer. Zn(2+) is required as a cofactor.

It is found in the cytoplasm. It catalyses the reaction tRNA(Thr) + L-threonine + ATP = L-threonyl-tRNA(Thr) + AMP + diphosphate + H(+). Functionally, catalyzes the attachment of threonine to tRNA(Thr) in a two-step reaction: L-threonine is first activated by ATP to form Thr-AMP and then transferred to the acceptor end of tRNA(Thr). Also edits incorrectly charged L-seryl-tRNA(Thr). The protein is Threonine--tRNA ligase of Streptococcus pyogenes serotype M49 (strain NZ131).